Reading from the N-terminus, the 298-residue chain is Olfactory receptor 52Z1P (298 aa).

At 1-14 the chain is on the extracellular side; the sequence is MGIPGLEGLHTWIS. Residues 15–35 form a helical membrane-spanning segment; the sequence is IPFSFMYIVAVAGNIFLIFLI. The Cytoplasmic segment spans residues 36–43; the sequence is MTERSLHE. The helical transmembrane segment at 44-64 threads the bilayer; sequence PMYLFLSMLASADFLLATAAA. The Extracellular portion of the chain corresponds to 65 to 85; it reads PKVLAILWFHSMDISFGSCVS. C83 and C164 are disulfide-bonded. The helical transmembrane segment at 86–106 threads the bilayer; sequence QMFFIHFIFVAESAILLAMAF. At 107–128 the chain is on the cytoplasmic side; sequence DRYVAICYPLRYTILTSSAVRK. The chain crosses the membrane as a helical span at residues 129–149; it reads IGIAAVVRSFFICCPFIFLVY. The Extracellular portion of the chain corresponds to 150–178; sequence RLTYCGRNIIPHSYCEHIARLACGNINVN. Residues 179 to 199 form a helical membrane-spanning segment; that stretch reads IIYGLTVALLSTGLDIVLIII. Residues 200–223 lie on the Cytoplasmic side of the membrane; sequence SYTMILHSVFQISSWAARFKALST. Residues 224 to 244 form a helical membrane-spanning segment; sequence CGSHICVIFMFYTPAFFSFLA. The Extracellular segment spans residues 245-257; it reads HRFGGKTIPHHIH. A helical transmembrane segment spans residues 258-278; that stretch reads ILVGSLYVLVPPMLNPIIYGV. Residues 279 to 298 lie on the Cytoplasmic side of the membrane; that stretch reads KTKQIKDRVILLFSPISVCC.

It belongs to the G-protein coupled receptor 1 family.

The protein resides in the cell membrane. Its function is as follows. Odorant receptor. The protein is Olfactory receptor 52Z1P of Homo sapiens (Human).